Reading from the N-terminus, the 765-residue chain is Endothelin-converting enzyme 2 (765 aa).

The Cytoplasmic segment spans residues 1 to 60 (MSVALQELGGGGNMVEYKRATLRDEDAPETPVEGGASPDAVEAGFRKRTSRLLGLHTQLE). The chain crosses the membrane as a helical; Signal-anchor for type II membrane protein span at residues 61–81 (LVLAGVSLLLAALLLGCLVAL). The Lumenal portion of the chain corresponds to 82-765 (GVQYHRDPSH…MNSGQLCEVW (684 aa)). One can recognise a Peptidase M13 domain in the interval 93–765 (TCLTEACIRV…MNSGQLCEVW (673 aa)). Disulfide bonds link cysteine 94–cysteine 99, cysteine 117–cysteine 750, cysteine 125–cysteine 710, cysteine 181–cysteine 430, and cysteine 639–cysteine 762. N-linked (GlcNAc...) asparagine glycosylation is found at asparagine 161, asparagine 165, asparagine 206, asparagine 266, asparagine 311, asparagine 378, and asparagine 534. Histidine 602 lines the Zn(2+) pocket. Glutamate 603 is an active-site residue. Histidine 606 provides a ligand contact to Zn(2+). N-linked (GlcNAc...) asparagine glycosylation is found at asparagine 627 and asparagine 635. Glutamate 662 is a Zn(2+) binding site. The active-site Proton donor is the aspartate 666.

It belongs to the peptidase M13 family. It depends on Zn(2+) as a cofactor. Isoform ECE2-1 and isoform ECE2-2 are expressed in brain and adrenal gland.

The protein resides in the golgi apparatus membrane. Its subcellular location is the cytoplasmic vesicle. It localises to the secretory vesicle membrane. It catalyses the reaction Hydrolysis of the 21-Trp-|-Val-22 bond in big endothelin to form endothelin 1.. Functionally, converts big endothelin-1 to endothelin-1. Also involved in the processing of various neuroendocrine peptides, including neurotensin, angiotensin I, substance P, proenkephalin-derived peptides, and prodynorphin-derived peptides. May play a role in amyloid-beta processing. This chain is Endothelin-converting enzyme 2, found in Bos taurus (Bovine).